A 377-amino-acid polypeptide reads, in one-letter code: Queuine tRNA-ribosyltransferase (377 aa).

D89 serves as the catalytic Proton acceptor. Substrate is bound by residues 89-93, D143, Q187, and G214; that span reads DSGGF. The segment at 245–251 is RNA binding; the sequence is GVGKPED. The active-site Nucleophile is D264. Residues 269-273 are RNA binding; important for wobble base 34 recognition; sequence TRNAR. The Zn(2+) site is built by C302, C304, C307, and H333.

It belongs to the queuine tRNA-ribosyltransferase family. As to quaternary structure, homodimer. Within each dimer, one monomer is responsible for RNA recognition and catalysis, while the other monomer binds to the replacement base PreQ1. Zn(2+) is required as a cofactor.

The catalysed reaction is 7-aminomethyl-7-carbaguanine + guanosine(34) in tRNA = 7-aminomethyl-7-carbaguanosine(34) in tRNA + guanine. It functions in the pathway tRNA modification; tRNA-queuosine biosynthesis. Its function is as follows. Catalyzes the base-exchange of a guanine (G) residue with the queuine precursor 7-aminomethyl-7-deazaguanine (PreQ1) at position 34 (anticodon wobble position) in tRNAs with GU(N) anticodons (tRNA-Asp, -Asn, -His and -Tyr). Catalysis occurs through a double-displacement mechanism. The nucleophile active site attacks the C1' of nucleotide 34 to detach the guanine base from the RNA, forming a covalent enzyme-RNA intermediate. The proton acceptor active site deprotonates the incoming PreQ1, allowing a nucleophilic attack on the C1' of the ribose to form the product. After dissociation, two additional enzymatic reactions on the tRNA convert PreQ1 to queuine (Q), resulting in the hypermodified nucleoside queuosine (7-(((4,5-cis-dihydroxy-2-cyclopenten-1-yl)amino)methyl)-7-deazaguanosine). The chain is Queuine tRNA-ribosyltransferase from Shewanella piezotolerans (strain WP3 / JCM 13877).